A 1184-amino-acid polypeptide reads, in one-letter code: DNA-directed RNA polymerase subunit beta' (1184 aa).

4 residues coordinate Zn(2+): C60, C62, C75, and C78. Mg(2+)-binding residues include D449, D451, and D453. C794, C867, C874, and C877 together coordinate Zn(2+).

It belongs to the RNA polymerase beta' chain family. The RNAP catalytic core consists of 2 alpha, 1 beta, 1 beta' and 1 omega subunit. When a sigma factor is associated with the core the holoenzyme is formed, which can initiate transcription. Mg(2+) serves as cofactor. It depends on Zn(2+) as a cofactor.

It catalyses the reaction RNA(n) + a ribonucleoside 5'-triphosphate = RNA(n+1) + diphosphate. Its function is as follows. DNA-dependent RNA polymerase catalyzes the transcription of DNA into RNA using the four ribonucleoside triphosphates as substrates. The sequence is that of DNA-directed RNA polymerase subunit beta' from Thermoanaerobacter sp. (strain X514).